The chain runs to 375 residues: Probable Na(+)/H(+) antiporter GerT (375 aa).

A run of 10 helical transmembrane segments spans residues 27 to 47 (PSVLGKLIVGIIIGPAVLGII), 89 to 109 (AGGIIFPFIGGYVTGLLFGLI), 112 to 132 (HAIFLGLLLCATSVSITVQTL), 145 to 165 (TILGAAVFDDVIVVILLAFVM), 183 to 203 (IIFFVSIVFIAWKVVPWIMKM), 204 to 224 (LVPLRVTEALISAALIICFSF), 226 to 246 (YYSEMMGIAGIIGAFAAGIAI), 261 to 281 (PIAYAIFVPVFFVSIGMEITF), 288 to 308 (LWFIIIMTLIAIFTKLIGSGL), and 350 to 370 (ENFTAIVIVVILTTIITPPLL).

It belongs to the monovalent cation:proton antiporter 2 (CPA2) transporter (TC 2.A.37) family.

It localises to the membrane. In terms of biological role, contributes to the success of spore outgrowth from the germinated state during alkaline or Na(+) stress. Does not have a significant role in germination. This chain is Probable Na(+)/H(+) antiporter GerT (gerT), found in Bacillus cereus.